The chain runs to 163 residues: Small ribosomal subunit protein uS7 (163 aa).

It belongs to the universal ribosomal protein uS7 family. In terms of assembly, part of the 30S ribosomal subunit. Contacts proteins S9 and S11.

In terms of biological role, one of the primary rRNA binding proteins, it binds directly to 16S rRNA where it nucleates assembly of the head domain of the 30S subunit. Is located at the subunit interface close to the decoding center, probably blocks exit of the E-site tRNA. This is Small ribosomal subunit protein uS7 from Rickettsia bellii (strain RML369-C).